A 191-amino-acid polypeptide reads, in one-letter code: Reticulon-like protein B15 (191 aa).

Positions 13-191 (VADLCLWKDK…SKIPRAPKVE (179 aa)) constitute a Reticulon domain. The next 3 membrane-spanning stretches (helical) occupy residues 23–43 (INSG…EFME), 47–67 (VPLL…WAKF), and 122–142 (VAII…YICL).

The protein localises to the endoplasmic reticulum membrane. This chain is Reticulon-like protein B15 (RTNLB15), found in Arabidopsis thaliana (Mouse-ear cress).